A 358-amino-acid polypeptide reads, in one-letter code: Uroporphyrinogen decarboxylase (358 aa).

Residues 29–33 (RQAGR), D79, Y156, T211, and H329 contribute to the substrate site.

This sequence belongs to the uroporphyrinogen decarboxylase family. As to quaternary structure, homodimer.

It is found in the cytoplasm. It catalyses the reaction uroporphyrinogen III + 4 H(+) = coproporphyrinogen III + 4 CO2. It functions in the pathway porphyrin-containing compound metabolism; protoporphyrin-IX biosynthesis; coproporphyrinogen-III from 5-aminolevulinate: step 4/4. Its function is as follows. Catalyzes the decarboxylation of four acetate groups of uroporphyrinogen-III to yield coproporphyrinogen-III. The sequence is that of Uroporphyrinogen decarboxylase from Idiomarina loihiensis (strain ATCC BAA-735 / DSM 15497 / L2-TR).